We begin with the raw amino-acid sequence, 501 residues long: Ribose import ATP-binding protein RbsA (501 aa).

ABC transporter domains lie at 5-241 and 252-495; these read LQLK…VGRK and APGD…VGKL. 37–44 is a binding site for ATP; sequence GENGAGKS.

Belongs to the ABC transporter superfamily. Ribose importer (TC 3.A.1.2.1) family. The complex is composed of an ATP-binding protein (RbsA), two transmembrane proteins (RbsC) and a solute-binding protein (RbsB).

Its subcellular location is the cell inner membrane. It catalyses the reaction D-ribose(out) + ATP + H2O = D-ribose(in) + ADP + phosphate + H(+). In terms of biological role, part of the ABC transporter complex RbsABC involved in ribose import. Responsible for energy coupling to the transport system. This Escherichia coli O6:H1 (strain CFT073 / ATCC 700928 / UPEC) protein is Ribose import ATP-binding protein RbsA.